A 628-amino-acid chain; its full sequence is Forkhead box protein O (628 aa).

Disordered regions lie at residues Arg-39–Gln-77, Lys-182–Lys-205, Gly-217–Pro-269, Gln-316–Tyr-359, and Asn-389–Val-415. Thr-44 bears the Phosphothreonine; by PKB/AKT1 mark. The segment covering Thr-63–Gln-77 has biased composition (polar residues). Ser-75 carries the phosphoserine modification. The segment at residues Trp-95–Gly-201 is a DNA-binding region (fork-head). The residue at position 190 (Ser-190) is a Phosphoserine; by PKB/AKT1. 2 stretches are compositionally biased toward polar residues: residues Ala-221–Ser-230 and Arg-256–Gly-265. Ser-259 carries the post-translational modification Phosphoserine; by PKB/AKT1. Ser-262, Ser-263, and Ser-268 each carry phosphoserine. Residues Ser-328–Pro-337 are compositionally biased toward pro residues. The segment covering Pro-338–Ala-351 has biased composition (low complexity). The span at Ser-402–Asn-414 shows a compositional bias: polar residues.

In terms of assembly, interacts with melt.

It is found in the cytoplasm. The protein localises to the nucleus. Transcription factor involved in the regulation of the insulin signaling pathway. Consistently activates both the downstream target Thor\d4EBP and the feedback control target InR. Involved in negative regulation of the cell cycle, modulating cell growth and proliferation. In response to cellular stresses, such as nutrient deprivation or increased levels of reactive oxygen species, foxo is activated and inhibits growth through the action of target genes such as Thor. Foxo activated in the adult fat body can regulate lifespan in adults; an insulin peptide itself may function as one secondary messenger of insulin-regulated aging. Also regulates Lip4, homolog of human acid lipases, thereby acting as a key modulator of lipid metabolism by insulin signaling and integrates insulin responses to glucose and lipid homeostasis. This Drosophila yakuba (Fruit fly) protein is Forkhead box protein O.